Here is a 245-residue protein sequence, read N- to C-terminus: 14-3-3 protein zeta/delta (245 aa).

M1 carries the post-translational modification N-acetylmethionine. At K3 the chain carries N6-acetyllysine. Position 58 is a phosphoserine; by PKA (S58). Residue K68 is modified to N6-acetyllysine. Phosphoserine occurs at positions 184, 207, and 210. T232 carries the phosphothreonine; by CK1 modification.

It belongs to the 14-3-3 family. In terms of assembly, interacts with CDK16 and BSPRY. Interacts with WEE1 (C-terminal). Interacts with SAMSN1. Interacts with MLF1 (phosphorylated form); the interaction retains it in the cytoplasm. Interacts with Thr-phosphorylated ITGB2. Interacts with BCL2L11. Homodimer. Heterodimerizes with YWHAE. Homo- and heterodimerization is inhibited by phosphorylation on Ser-58. Interacts with FOXO4, NOXA1, SSH1 and ARHGEF2. Interacts with Pseudomonas aeruginosa exoS (unphosphorylated form). Interacts with BAX; the interaction occurs in the cytoplasm. Under stress conditions, MAPK8-mediated phosphorylation releases BAX to mitochondria. Interacts with phosphorylated RAF1; the interaction is inhibited when YWHAZ is phosphorylated on Thr-232. Interacts with TP53; the interaction enhances p53 transcriptional activity. The Ser-58 phosphorylated form inhibits this interaction and p53 transcriptional activity. Interacts with ABL1 (phosphorylated form); the interaction retains ABL1 in the cytoplasm. Interacts with PKA-phosphorylated AANAT; the interaction modulates AANAT enzymatic activity by increasing affinity for arylalkylamines and acetyl-CoA and protecting the enzyme from dephosphorylation and proteasomal degradation. It may also prevent thiol-dependent inactivation. Interacts with AKT1; the interaction phosphorylates YWHAZ and modulates dimerization. Interacts with GAB2 and TLK2. Interacts with the 'Thr-369' phosphorylated form of DAPK2. Interacts with PI4KB, TBC1D22A and TBC1D22B. Interacts with ZFP36L1 (via phosphorylated form); this interaction occurs in a p38 MAPK- and AKT-signaling pathways. Interacts with SLITRK1. Interacts with AK5, LDB1, MADD, MARK3, PDE1A and SMARCB1. Interacts with YWHAZ. Interacts with MEFV. Interacts with ADAM22 (via C-terminus). The delta, brain-specific form differs from the zeta form in being phosphorylated. Phosphorylation on Ser-184 by MAPK8; promotes dissociation of BAX and translocation of BAX to mitochondria. Phosphorylation on Thr-232; inhibits binding of RAF1. Phosphorylated on Ser-58 by PKA and protein kinase C delta type catalytic subunit in a sphingosine-dependent fashion. Phosphorylation on Ser-58 by PKA; disrupts homodimerization and heterodimerization with YHAE and TP53. Highly expressed in brain (at protein level).

It is found in the cytoplasm. It localises to the melanosome. Adapter protein implicated in the regulation of a large spectrum of both general and specialized signaling pathways. Binds to a large number of partners, usually by recognition of a phosphoserine or phosphothreonine motif. Binding generally results in the modulation of the activity of the binding partner. Promotes cytosolic retention and inactivation of TFEB transcription factor by binding to phosphorylated TFEB. Induces ARHGEF7 activity on RAC1 as well as lamellipodia and membrane ruffle formation. In neurons, regulates spine maturation through the modulation of ARHGEF7 activity. The polypeptide is 14-3-3 protein zeta/delta (YWHAZ) (Ovis aries (Sheep)).